The sequence spans 35 residues: Photosystem II reaction center protein T (35 aa).

A helical transmembrane segment spans residues 3–23 (ALVYTFLLVSTLGIIFFAIFF).

Belongs to the PsbT family. PSII is composed of 1 copy each of membrane proteins PsbA, PsbB, PsbC, PsbD, PsbE, PsbF, PsbH, PsbI, PsbJ, PsbK, PsbL, PsbM, PsbT, PsbY, PsbZ, Psb30/Ycf12, at least 3 peripheral proteins of the oxygen-evolving complex and a large number of cofactors. It forms dimeric complexes.

Its subcellular location is the plastid. The protein localises to the chloroplast thylakoid membrane. Functionally, found at the monomer-monomer interface of the photosystem II (PS II) dimer, plays a role in assembly and dimerization of PSII. PSII is a light-driven water plastoquinone oxidoreductase, using light energy to abstract electrons from H(2)O, generating a proton gradient subsequently used for ATP formation. This is Photosystem II reaction center protein T from Cedrus deodara (Deodar cedar).